The chain runs to 253 residues: Chloride intracellular channel protein 4 (253 aa).

An N-acetylalanine modification is found at A2. Residues 2–101 are required for insertion into the membrane; sequence ALSMPLNGLK…EEFLEEVLCP (100 aa). S4 is subject to Phosphoserine. Position 24 is an N6-acetyllysine (K24). The short motif at 35-38 is the G-site element; it reads CPFS. The chain crosses the membrane as a helical span at residues 37-57; sequence FSQRLFMILWLKGVVFSVTTV. The GST C-terminal domain maps to 81–244; it reads NSEVKTDVNK…PSDKEVEIAY (164 aa). Position 130 is an N6-acetyllysine (K130). Phosphoserine is present on residues S132, S167, and S236. Y244 bears the Phosphotyrosine mark.

Belongs to the chloride channel CLIC family. In terms of assembly, component of a multimeric complex consisting of several cytoskeletal proteins, including actin, ezrin, alpha-actinin, gelsolin, IQGAP1 and CLIC5A. Binds directly to brain dynamin I in a complex containing actin, tubulin and 14-3-3 isoforms. Monomer. Interacts with HRH3. Interacts with AKAP9. In terms of tissue distribution, detected in epithelial cells from colon, esophagus and kidney (at protein level). Expression is prominent in heart, kidney, placenta and skeletal muscle.

The protein localises to the cytoplasm. It localises to the cytoskeleton. Its subcellular location is the microtubule organizing center. The protein resides in the centrosome. It is found in the cytoplasmic vesicle membrane. The protein localises to the nucleus. It localises to the cell membrane. Its subcellular location is the mitochondrion. The protein resides in the cell junction. It is found in the endoplasmic reticulum membrane. The enzyme catalyses chloride(in) = chloride(out). It carries out the reaction thiocyanate(in) = thiocyanate(out). The catalysed reaction is nitrate(in) = nitrate(out). It catalyses the reaction iodide(out) = iodide(in). The enzyme catalyses bromide(in) = bromide(out). It carries out the reaction fluoride(in) = fluoride(out). The catalysed reaction is choline(out) = choline(in). With respect to regulation, inhibited by rapamycin, amphotericin B and IAA-94. Functionally, in the soluble state, catalyzes glutaredoxin-like thiol disulfide exchange reactions with reduced glutathione as electron donor. Can insert into membranes and form voltage-dependent multi-ion conductive channels. Membrane insertion seems to be redox-regulated and may occur only under oxidizing conditions. Has alternate cellular functions like a potential role in angiogenesis or in maintaining apical-basolateral membrane polarity during mitosis and cytokinesis. Could also promote endothelial cell proliferation and regulate endothelial morphogenesis (tubulogenesis). Promotes cell-surface expression of HRH3. The protein is Chloride intracellular channel protein 4 of Homo sapiens (Human).